Reading from the N-terminus, the 207-residue chain is Thiamine-phosphate synthase (207 aa).

Residues Q35 to K39 and N67 each bind 4-amino-2-methyl-5-(diphosphooxymethyl)pyrimidine. Residues D68 and D86 each contribute to the Mg(2+) site. T105 is a binding site for 4-amino-2-methyl-5-(diphosphooxymethyl)pyrimidine. S132–T134 serves as a coordination point for 2-[(2R,5Z)-2-carboxy-4-methylthiazol-5(2H)-ylidene]ethyl phosphate. K135 lines the 4-amino-2-methyl-5-(diphosphooxymethyl)pyrimidine pocket. Residue G162 participates in 2-[(2R,5Z)-2-carboxy-4-methylthiazol-5(2H)-ylidene]ethyl phosphate binding.

Belongs to the thiamine-phosphate synthase family. It depends on Mg(2+) as a cofactor.

It catalyses the reaction 2-[(2R,5Z)-2-carboxy-4-methylthiazol-5(2H)-ylidene]ethyl phosphate + 4-amino-2-methyl-5-(diphosphooxymethyl)pyrimidine + 2 H(+) = thiamine phosphate + CO2 + diphosphate. The enzyme catalyses 2-(2-carboxy-4-methylthiazol-5-yl)ethyl phosphate + 4-amino-2-methyl-5-(diphosphooxymethyl)pyrimidine + 2 H(+) = thiamine phosphate + CO2 + diphosphate. It carries out the reaction 4-methyl-5-(2-phosphooxyethyl)-thiazole + 4-amino-2-methyl-5-(diphosphooxymethyl)pyrimidine + H(+) = thiamine phosphate + diphosphate. It participates in cofactor biosynthesis; thiamine diphosphate biosynthesis; thiamine phosphate from 4-amino-2-methyl-5-diphosphomethylpyrimidine and 4-methyl-5-(2-phosphoethyl)-thiazole: step 1/1. In terms of biological role, condenses 4-methyl-5-(beta-hydroxyethyl)thiazole monophosphate (THZ-P) and 2-methyl-4-amino-5-hydroxymethyl pyrimidine pyrophosphate (HMP-PP) to form thiamine monophosphate (TMP). This is Thiamine-phosphate synthase from Pseudomonas putida (strain ATCC 700007 / DSM 6899 / JCM 31910 / BCRC 17059 / LMG 24140 / F1).